Here is a 97-residue protein sequence, read N- to C-terminus: Ferredoxin-3 (97 aa).

2 4Fe-4S ferredoxin-type domains span residues 18-47 and 65-95; these read FAESIDKDKCIGCGRCIKVCGYPVLDLKAL and KVMVVAHPENCIGCQACARICPKNCYTHNPL. [4Fe-4S] cluster is bound by residues Cys-27, Cys-30, Cys-33, Cys-37, Cys-75, Cys-78, Cys-81, and Cys-85.

In terms of assembly, homodimer. [4Fe-4S] cluster serves as cofactor.

Ferredoxins are iron-sulfur proteins that transfer electrons in a wide variety of metabolic reactions. The polypeptide is Ferredoxin-3 (fdxB) (Nostoc sp. (strain PCC 7120 / SAG 25.82 / UTEX 2576)).